Reading from the N-terminus, the 290-residue chain is Bifunctional protein FolD (290 aa).

NADP(+) is bound by residues 165–167 (GRG), Ser-194, and Ile-235.

The protein belongs to the tetrahydrofolate dehydrogenase/cyclohydrolase family. Homodimer.

The enzyme catalyses (6R)-5,10-methylene-5,6,7,8-tetrahydrofolate + NADP(+) = (6R)-5,10-methenyltetrahydrofolate + NADPH. It carries out the reaction (6R)-5,10-methenyltetrahydrofolate + H2O = (6R)-10-formyltetrahydrofolate + H(+). The protein operates within one-carbon metabolism; tetrahydrofolate interconversion. In terms of biological role, catalyzes the oxidation of 5,10-methylenetetrahydrofolate to 5,10-methenyltetrahydrofolate and then the hydrolysis of 5,10-methenyltetrahydrofolate to 10-formyltetrahydrofolate. The sequence is that of Bifunctional protein FolD from Syntrophotalea carbinolica (strain DSM 2380 / NBRC 103641 / GraBd1) (Pelobacter carbinolicus).